The sequence spans 298 residues: Ribosomal RNA small subunit methyltransferase H (298 aa).

S-adenosyl-L-methionine contacts are provided by residues 38 to 40, D57, F84, D100, and Q107; that span reads GGH.

The protein belongs to the methyltransferase superfamily. RsmH family.

It is found in the cytoplasm. The enzyme catalyses cytidine(1402) in 16S rRNA + S-adenosyl-L-methionine = N(4)-methylcytidine(1402) in 16S rRNA + S-adenosyl-L-homocysteine + H(+). Its function is as follows. Specifically methylates the N4 position of cytidine in position 1402 (C1402) of 16S rRNA. The chain is Ribosomal RNA small subunit methyltransferase H from Acaryochloris marina (strain MBIC 11017).